A 257-amino-acid polypeptide reads, in one-letter code: NAD-capped RNA hydrolase NudC (257 aa).

Substrate is bound by residues Lys25 and Arg69. The Zn(2+) site is built by Cys98 and Cys101. Residue Glu111 coordinates substrate. The Zn(2+) site is built by Cys116 and Cys119. Tyr124 serves as a coordination point for substrate. The region spanning 125-248 (PQIAPCIIVA…TVARRLIEDT (124 aa)) is the Nudix hydrolase domain. A divalent metal cation-binding residues include Ala158, Glu174, and Glu178. Residues 159-180 (GFVEVGETLEQAVAREVMEESG) carry the Nudix box motif. 192-199 (QPWPFPQS) contributes to the substrate binding site. Glu219 provides a ligand contact to a divalent metal cation. Substrate is bound at residue Ala241.

This sequence belongs to the Nudix hydrolase family. NudC subfamily. In terms of assembly, homodimer. The cofactor is Mg(2+). Mn(2+) is required as a cofactor. Zn(2+) serves as cofactor.

The enzyme catalyses a 5'-end NAD(+)-phospho-ribonucleoside in mRNA + H2O = a 5'-end phospho-adenosine-phospho-ribonucleoside in mRNA + beta-nicotinamide D-ribonucleotide + 2 H(+). It catalyses the reaction NAD(+) + H2O = beta-nicotinamide D-ribonucleotide + AMP + 2 H(+). The catalysed reaction is NADH + H2O = reduced beta-nicotinamide D-ribonucleotide + AMP + 2 H(+). In terms of biological role, mRNA decapping enzyme that specifically removes the nicotinamide adenine dinucleotide (NAD) cap from a subset of mRNAs by hydrolyzing the diphosphate linkage to produce nicotinamide mononucleotide (NMN) and 5' monophosphate mRNA. The NAD-cap is present at the 5'-end of some mRNAs and stabilizes RNA against 5'-processing. Has preference for mRNAs with a 5'-end purine. Catalyzes the hydrolysis of a broad range of dinucleotide pyrophosphates. In Escherichia coli O45:K1 (strain S88 / ExPEC), this protein is NAD-capped RNA hydrolase NudC.